Here is a 284-residue protein sequence, read N- to C-terminus: Pantothenate synthetase (284 aa).

Met30–His37 provides a ligand contact to ATP. His37 serves as the catalytic Proton donor. Gln61 provides a ligand contact to (R)-pantoate. Gln61 contributes to the beta-alanine binding site. Gly149–Asp152 is a binding site for ATP. Gln155 serves as a coordination point for (R)-pantoate. ATP contacts are provided by residues Val178 and Leu186 to Arg189.

This sequence belongs to the pantothenate synthetase family. As to quaternary structure, homodimer.

It localises to the cytoplasm. The catalysed reaction is (R)-pantoate + beta-alanine + ATP = (R)-pantothenate + AMP + diphosphate + H(+). Its pathway is cofactor biosynthesis; (R)-pantothenate biosynthesis; (R)-pantothenate from (R)-pantoate and beta-alanine: step 1/1. Its function is as follows. Catalyzes the condensation of pantoate with beta-alanine in an ATP-dependent reaction via a pantoyl-adenylate intermediate. This is Pantothenate synthetase from Aeromonas salmonicida (strain A449).